A 427-amino-acid chain; its full sequence is Serine--tRNA ligase (427 aa).

An L-serine-binding site is contributed by 232–234 (TAE). Residue 263–265 (RSE) coordinates ATP. Glu286 contacts L-serine. Residue 350 to 353 (EISS) participates in ATP binding. Ser385 contributes to the L-serine binding site.

It belongs to the class-II aminoacyl-tRNA synthetase family. Type-1 seryl-tRNA synthetase subfamily. As to quaternary structure, homodimer. The tRNA molecule binds across the dimer.

It is found in the cytoplasm. The enzyme catalyses tRNA(Ser) + L-serine + ATP = L-seryl-tRNA(Ser) + AMP + diphosphate + H(+). It catalyses the reaction tRNA(Sec) + L-serine + ATP = L-seryl-tRNA(Sec) + AMP + diphosphate + H(+). The protein operates within aminoacyl-tRNA biosynthesis; selenocysteinyl-tRNA(Sec) biosynthesis; L-seryl-tRNA(Sec) from L-serine and tRNA(Sec): step 1/1. Functionally, catalyzes the attachment of serine to tRNA(Ser). Is also able to aminoacylate tRNA(Sec) with serine, to form the misacylated tRNA L-seryl-tRNA(Sec), which will be further converted into selenocysteinyl-tRNA(Sec). This is Serine--tRNA ligase from Aromatoleum aromaticum (strain DSM 19018 / LMG 30748 / EbN1) (Azoarcus sp. (strain EbN1)).